The sequence spans 156 residues: MQHSQLSPNARQQLAETVILNKARLGLSWQDLADGTGLALTFVTAALLGQHALPEAAARKVAGQLGLDDDAVLLLQTIPLRGSIPGGIPTDPTIYRFYEMLQVYGSTLKALVHEQFGDGIISAINFKLDIQKVEDPEGGSRAVITLDGKYLPTKPF.

Catalysis depends on residues R96, E99, and S122.

This sequence belongs to the cyanase family.

It carries out the reaction cyanate + hydrogencarbonate + 3 H(+) = NH4(+) + 2 CO2. Catalyzes the reaction of cyanate with bicarbonate to produce ammonia and carbon dioxide. In Pseudomonas paraeruginosa (strain DSM 24068 / PA7) (Pseudomonas aeruginosa (strain PA7)), this protein is Cyanate hydratase.